We begin with the raw amino-acid sequence, 436 residues long: 3-ketoacyl-CoA thiolase (436 aa).

Residue C99 is the Acyl-thioester intermediate of the active site. Catalysis depends on proton acceptor residues H392 and C422.

The protein belongs to the thiolase-like superfamily. Thiolase family. As to quaternary structure, heterotetramer of two alpha chains (FadJ) and two beta chains (FadI).

It is found in the cytoplasm. It carries out the reaction an acyl-CoA + acetyl-CoA = a 3-oxoacyl-CoA + CoA. Its pathway is lipid metabolism; fatty acid beta-oxidation. Functionally, catalyzes the final step of fatty acid oxidation in which acetyl-CoA is released and the CoA ester of a fatty acid two carbons shorter is formed. In Shigella dysenteriae serotype 1 (strain Sd197), this protein is 3-ketoacyl-CoA thiolase.